Here is a 268-residue protein sequence, read N- to C-terminus: AN1-type zinc finger protein 1 (268 aa).

N-acetylalanine is present on alanine 2. 2 consecutive AN1-type zinc fingers follow at residues 4 to 52 and 58 to 106; these read LDIG…VVKE and EHKS…VAKP. Residues cysteine 10, cysteine 15, cysteine 25, cysteine 28, cysteine 33, histidine 36, histidine 42, cysteine 44, cysteine 64, cysteine 69, cysteine 79, cysteine 82, cysteine 87, histidine 90, histidine 96, and cysteine 98 each coordinate Zn(2+). Residues 160-260 are ubiquitin-like; that stretch reads QTERTYFQVY…EYLNDEEQFL (101 aa).

As to quaternary structure, associates with the 26S proteasome; this association occurs upon exposure to arsenite and is reduced in the presence of ATP. Interacts (via AN1-type 1 and 2 zinc fingers) with PSMD1; this interaction is increased upon arsenite treatment and occurs in an ATP-independent manner. Interacts with PSMC4. Interacts with PSMA1. Interacts (via its ubiquitin-like region) with VCP; this interaction occurs in an arsenite-dependent manner and is necessary for the recruitment of the ubiquitin-selective ATPase VCP to stress granules (SGs).

Its subcellular location is the cytoplasm. The protein resides in the stress granule. Functionally, plays a role in the regulation of cytoplasmic stress granules (SGs) turnover. SGs are dynamic and transient cytoplasmic ribonucleoprotein assemblies important for cellular protein homeostasis when protein production is suspended after acute exogenous stress. Associates with SGs and is involved in the efficient and specific arsenite-induced clearance process of SGs through the recruitment of the ubiquitin-selective ATPase VCP and the 26S proteasome. This process requires both complexes for efficient degradation of damaged ubiquitinated SG proteins during recovery from arsenite stress, and hence avoiding aberrant cytoplasmic SGs degradation via autophagy. The sequence is that of AN1-type zinc finger protein 1 from Mus musculus (Mouse).